Here is a 617-residue protein sequence, read N- to C-terminus: RNA polymerase sigma factor RpoD (617 aa).

Positions 170–220 (PDDGSLPAEEVEPVNLKDDSADSKEKDDEEEESDDSSDSDDEGDGGPDPEE) are disordered. A compositionally biased stretch (basic and acidic residues) spans 184–195 (NLKDDSADSKEK). A compositionally biased stretch (acidic residues) spans 196–218 (DDEEEESDDSSDSDDEGDGGPDP). The segment at 383 to 453 (MVEANLRLVI…TRSIADQART (71 aa)) is sigma-70 factor domain-2. Residues 407–410 (DLIQ) carry the Interaction with polymerase core subunit RpoC motif. The tract at residues 462-538 (ETINKLNRIS…DSTMQSPIEM (77 aa)) is sigma-70 factor domain-3. The sigma-70 factor domain-4 stretch occupies residues 551–604 (VLAGLTAREAKVLRMRFGIDMNTDHTLEEVGKQFDVTRERIRQIEAKALRKLRH). Positions 577–596 (LEEVGKQFDVTRERIRQIEA) form a DNA-binding region, H-T-H motif.

This sequence belongs to the sigma-70 factor family. RpoD/SigA subfamily. As to quaternary structure, interacts transiently with the RNA polymerase catalytic core.

The protein resides in the cytoplasm. Functionally, sigma factors are initiation factors that promote the attachment of RNA polymerase to specific initiation sites and are then released. This sigma factor is the primary sigma factor during exponential growth. This Pseudomonas aeruginosa (strain ATCC 15692 / DSM 22644 / CIP 104116 / JCM 14847 / LMG 12228 / 1C / PRS 101 / PAO1) protein is RNA polymerase sigma factor RpoD.